The following is a 314-amino-acid chain: Mitochondrial thiamine pyrophosphate carrier 1 (314 aa).

The next 6 helical transmembrane spans lie at 14–30 (VAAW…GLLA), 84–100 (LLYV…YSLF), 116–136 (LVVG…FDVL), 170–186 (GSIA…SIMF), 217–233 (SAGT…TFPL), and 285–302 (GILV…VSFW). 3 Solcar repeats span residues 14-103 (VAAW…FNRY), 110-195 (EARL…IRIY), and 210-310 (ELAT…AIHY).

This sequence belongs to the mitochondrial carrier (TC 2.A.29) family.

It localises to the mitochondrion inner membrane. Functionally, mitochondrial transporter that mediates uptake of thiamine pyrophosphate (ThPP) into mitochondria. The polypeptide is Mitochondrial thiamine pyrophosphate carrier 1 (TPC1) (Saccharomyces cerevisiae (strain YJM789) (Baker's yeast)).